Here is a 419-residue protein sequence, read N- to C-terminus: Synaptosomal-associated protein 47 (419 aa).

T-SNARE coiled-coil homology domains lie at 109 to 171 and 356 to 418; these read AANP…LTEL and KDWP…MRKL.

This sequence belongs to the SVAP1 family. As to quaternary structure, associates with the BLOC-1 complex. Interacts with BLOC1S6. Forms a complex containing SNAP47, VAMP2 and STX1A.

Its subcellular location is the endomembrane system. It is found in the cytoplasm. The protein localises to the perinuclear region. May play a role in intracellular membrane fusion. This is Synaptosomal-associated protein 47 (Snap47) from Rattus norvegicus (Rat).